The primary structure comprises 509 residues: tRNA-2-methylthio-N(6)-dimethylallyladenosine synthase (509 aa).

The span at 1–15 (MNEQQRLASQQVNSS) shows a compositional bias: polar residues. The segment at 1 to 26 (MNEQQRLASQQVNSSTKKEEKDYSKY) is disordered. Positions 16–25 (TKKEEKDYSK) are enriched in basic and acidic residues. The MTTase N-terminal domain maps to 66 to 184 (RKFYIRTYGC…LPYILKDAMF (119 aa)). [4Fe-4S] cluster-binding residues include Cys75, Cys111, Cys145, Cys221, Cys225, and Cys228. Residues 207–437 (RRGDIKAWVN…NALVNKLAIE (231 aa)) form the Radical SAM core domain. The TRAM domain occupies 440-503 (NRYKGQIVEV…TWSLNGELVE (64 aa)).

Belongs to the methylthiotransferase family. MiaB subfamily. In terms of assembly, monomer. Requires [4Fe-4S] cluster as cofactor.

It localises to the cytoplasm. It carries out the reaction N(6)-dimethylallyladenosine(37) in tRNA + (sulfur carrier)-SH + AH2 + 2 S-adenosyl-L-methionine = 2-methylsulfanyl-N(6)-dimethylallyladenosine(37) in tRNA + (sulfur carrier)-H + 5'-deoxyadenosine + L-methionine + A + S-adenosyl-L-homocysteine + 2 H(+). In terms of biological role, catalyzes the methylthiolation of N6-(dimethylallyl)adenosine (i(6)A), leading to the formation of 2-methylthio-N6-(dimethylallyl)adenosine (ms(2)i(6)A) at position 37 in tRNAs that read codons beginning with uridine. In Bacillus cereus (strain AH187), this protein is tRNA-2-methylthio-N(6)-dimethylallyladenosine synthase.